The primary structure comprises 471 residues: Monocarboxylate transporter 4 (471 aa).

Over 1–17 the chain is Cytoplasmic; that stretch reads MGGAVVDEGPTGIKAPD. A helical membrane pass occupies residues 18–38; that stretch reads GGWGWAVLFGCFIITGFSYAF. The Extracellular portion of the chain corresponds to 39-61; the sequence is PKAVSVFFKELMHEFGIGYSDTA. A helical transmembrane segment spans residues 62–82; sequence WISSILLAMLYGTGPLCSMCV. The Cytoplasmic portion of the chain corresponds to 83 to 84; it reads NR. The helical transmembrane segment at 85-105 threads the bilayer; the sequence is FGCRPVMLVGGLFASLGMVAA. Residues 106–109 are Extracellular-facing; sequence SFCR. A helical membrane pass occupies residues 110-130; sequence SIIQIYLTTGVITGLGLALNF. Over 131 to 149 the chain is Cytoplasmic; sequence QPSLIMLNRYFNKRRPMAN. Residues 150-170 traverse the membrane as a helical segment; sequence GLAAAGSPVFLCALSPLGQLL. The Extracellular portion of the chain corresponds to 171-179; sequence QDHYGWRGG. A helical membrane pass occupies residues 180–200; that stretch reads FLILGGLLLNCCVCAALMRPL. Residues 201–231 are Cytoplasmic-facing; the sequence is VAPQASGGAEPHGPQRPSPRLLDLSVFRDRG. Residues 232–252 traverse the membrane as a helical segment; sequence FLIYAVAASIMVLGLFVPPVF. The Extracellular portion of the chain corresponds to 253-267; it reads VVSYAKDMGVPDTKA. The helical transmembrane segment at 268 to 288 threads the bilayer; that stretch reads AFLLTILGFIDIFARPTAGFI. Residues 289–298 are Cytoplasmic-facing; sequence TGLKKVRPYS. A helical transmembrane segment spans residues 299–319; it reads VYLFSFAMFFNGFTDLTGSTA. The Extracellular segment spans residues 320–321; the sequence is SD. A helical membrane pass occupies residues 322–342; it reads YGGLVVFCIFFGISYGMVGAL. At 343–355 the chain is on the cytoplasmic side; that stretch reads QFEVLMAIVGTQK. Residues 356 to 376 form a helical membrane-spanning segment; that stretch reads FSSAIGLVLLLEAVAVLIGPP. Residues 377–391 are Extracellular-facing; it reads SGGKLLDATKVYKYV. A helical transmembrane segment spans residues 392 to 412; the sequence is FILAGAEVLTSSLVLLLGNFF. Residues 413–471 lie on the Cytoplasmic side of the membrane; the sequence is CIGKRKRPEVTKPEEVASEEEKLHKPPVDVRVDSREVEHFLKAEPEKNGEVVHTPETSV. 2 basolateral sorting signal regions span residues 429 to 447 and 447 to 471; these read ASEE…VDSR and REVE…ETSV. The residue at position 430 (Ser430) is a Phosphoserine. Residue Thr466 is modified to Phosphothreonine. Ser470 is modified (phosphoserine).

This sequence belongs to the major facilitator superfamily. Monocarboxylate porter (TC 2.A.1.13) family. Interacts with BSG; interaction mediates SLC16A3 targeting to the plasma membrane. Detected in testis, small intestine, parotid gland, lung and brain. Small amounts are detected in heart, kidney and spleen. Expressed in skeletal muscle.

The protein localises to the cell membrane. It localises to the basolateral cell membrane. It carries out the reaction (S)-lactate(in) + H(+)(in) = (S)-lactate(out) + H(+)(out). It catalyses the reaction pyruvate(out) + H(+)(out) = pyruvate(in) + H(+)(in). Proton-dependent transporter of monocarboxylates such as L-lactate and pyruvate. Plays a predominant role in the L-lactate efflux from highly glycolytic cells. The sequence is that of Monocarboxylate transporter 4 (Slc16a3) from Rattus norvegicus (Rat).